The following is a 564-amino-acid chain: Ovochymase-2 (564 aa).

The N-terminal stretch at 1-22 is a signal peptide; that stretch reads MLISRNKLILLLGIVFFERGKS. Residues 23 to 51 constitute a propeptide, activation peptide; the sequence is ATLSLPKAPSCGQSLVKVQPWNYFNIFSR. One can recognise a Peptidase S1 domain in the interval 52-299; the sequence is ILGGSQVEKG…VLPWIHEHIQ (248 aa). Cysteines 77 and 93 form a disulfide. His92 serves as the catalytic Charge relay system. A glycan (N-linked (GlcNAc...) asparagine) is linked at Asn104. Residue Glu119 coordinates Ca(2+). Catalysis depends on Asp142, which acts as the Charge relay system. Disulfide bonds link Cys176–Cys246, Cys207–Cys225, Cys236–Cys265, Cys311–Cys341, and Cys365–Cys384. The Charge relay system role is filled by Ser240. CUB domains lie at 311-421 and 431-543; these read CSEQ…YKAL and CSYL…VSFI. N-linked (GlcNAc...) asparagine glycans are attached at residues Asn415 and Asn451. Cystine bridges form between Cys431–Cys458 and Cys485–Cys506. N-linked (GlcNAc...) asparagine glycosylation occurs at Asn530.

It belongs to the peptidase S1 family.

The protein resides in the secreted. May be required for sperm ADAM3 processing and consequential sperm fertilizing ability. In vitro, has an endopeptidase activity. In Homo sapiens (Human), this protein is Ovochymase-2.